The following is a 940-amino-acid chain: MALSSLVEFVILVVKNPCYQQDDASSSIQEISISASEIASWDMSEILSYGSVKVRAHRTRLIQESSYFHGLLSGSFSESGLDHISVEWNLESFLNLLMCLYGYDIEITSSSFLPLFESALYFGVEKLLSICKNWLSVLASSNDNALPKVELSDLIQIWSFGLEHAGEFVPDLCVAYLAKNFMLVKSDKYFGNVPYELLMWCVKHPHLTVHSEMDLVDGLLIWLDAGGRLSDLPESSQDNTINLMEQVRFSLLPLWFIAGRSKSHGFSKFADQSIELVTKLMKMPSTCLVDSLTDGPPTDVRVRLTEYSEILDLSGCPQLNEASLLLSILPNSYFANLRWRKSLESFLKNPDDDERHQEQISHRTLPILSFESVKEIDISKCQRLDYKVVIKCFSKSFPSLRKLRAAYLLNIKVSTLLELLLNFRELTEVDLTVDVSPIIPVQASVFYSGQGHCLLSSITRLTLEGRSDICDMELRSISRVCESLCYLNIKGCALLSDACIASVIQRCKKLCSLIVCYTSFSENSILALCATISMTNEHMDINSVASNLQTLHMSKCEGISETSLLNLITHSQKMKSLCLRDTKVSDSVLCEFPGSTLEALDISNTTISWMALARVISRNPNLKTLKARGCKNLLQLEVDGRTDNFSPLVSGQEVFKCLSKGSGLEELEIGWGFSYFSFESLRPAASFLRVISVGLGASLGEDVLKLLPSTCPLLESIVLHFQEISDSALTSVLTSLKHLQELALSYCFGEISLQSFKFSMPNLRKLRLERVTRWMTNDDLLVLTQSCPNLTELSLVGCLHLTSDCQPIISAGWPGMISLHLEECGSITENGVASLYGCIALEDLFLRHNGSGIQKSFLLDATLKFPMLRLVSLDMCDAKEGGFDVPEEKEEGRSLSIVKISRCKSDRCSLGRRAAPMHRETLVMLWNGQTLTKTLLKQRL.

In terms of domain architecture, BTB spans 41–109 (WDMSEILSYG…LYGYDIEITS (69 aa)). Residues 155–258 (IQIWSFGLEH…FSLLPLWFIA (104 aa)) enclose the BACK domain.

It functions in the pathway protein modification; protein ubiquitination. In terms of biological role, may act as a substrate-specific adapter of an E3 ubiquitin-protein ligase complex (CUL3-RBX1-BTB) which mediates the ubiquitination and subsequent proteasomal degradation of target proteins. This Arabidopsis thaliana (Mouse-ear cress) protein is BTB/POZ domain-containing protein FBL11 (FBL11).